The chain runs to 276 residues: Urease accessory protein UreD (276 aa).

Belongs to the UreD family. In terms of assembly, ureD, UreF and UreG form a complex that acts as a GTP-hydrolysis-dependent molecular chaperone, activating the urease apoprotein by helping to assemble the nickel containing metallocenter of UreC. The UreE protein probably delivers the nickel.

The protein resides in the cytoplasm. Its function is as follows. Required for maturation of urease via the functional incorporation of the urease nickel metallocenter. The sequence is that of Urease accessory protein UreD from Variovorax paradoxus (strain S110).